Here is a 150-residue protein sequence, read N- to C-terminus: D-aminoacyl-tRNA deacylase (150 aa).

The Gly-cisPro motif, important for rejection of L-amino acids motif lies at 137–138 (GP).

It belongs to the DTD family. Homodimer.

It is found in the cytoplasm. It catalyses the reaction glycyl-tRNA(Ala) + H2O = tRNA(Ala) + glycine + H(+). The enzyme catalyses a D-aminoacyl-tRNA + H2O = a tRNA + a D-alpha-amino acid + H(+). An aminoacyl-tRNA editing enzyme that deacylates mischarged D-aminoacyl-tRNAs. Also deacylates mischarged glycyl-tRNA(Ala), protecting cells against glycine mischarging by AlaRS. Acts via tRNA-based rather than protein-based catalysis; rejects L-amino acids rather than detecting D-amino acids in the active site. By recycling D-aminoacyl-tRNA to D-amino acids and free tRNA molecules, this enzyme counteracts the toxicity associated with the formation of D-aminoacyl-tRNA entities in vivo and helps enforce protein L-homochirality. The polypeptide is D-aminoacyl-tRNA deacylase (Listeria innocua serovar 6a (strain ATCC BAA-680 / CLIP 11262)).